The sequence spans 280 residues: UBX domain-containing protein 10 (280 aa).

Residues 41-94 (SAKGRTRPSLQKSQGVEVCAHHIPSPPPAIPYELPSSQKPGACAPKSPNQGASD) are disordered. Ser87 bears the Phosphoserine mark. Residues 194–271 (DQEPRLLLAV…RIPHKSVLGI (78 aa)) enclose the UBX domain.

Belongs to the UBXN10 family. As to quaternary structure, interacts with CLUAP1; the interaction is direct and mediates interaction with the intraflagellar transport complex B (IFT-B). Interacts with VCP; the interaction is direct.

The protein resides in the cell projection. The protein localises to the cilium. Functionally, VCP/p97-binding protein required for ciliogenesis. Acts as a tethering factor that facilitates recruitment of VCP/p97 to the intraflagellar transport complex B (IFT-B) in cilia. UBX domain-containing proteins act as tethering factors for VCP/p97 and may specify substrate specificity of VCP/p97. The protein is UBX domain-containing protein 10 of Homo sapiens (Human).